A 435-amino-acid polypeptide reads, in one-letter code: MRGAYYIIIALCVVASSQVAAGSDRQLQIYEHGVMPADNAVVKTLAKRFLRGSRVVHDDLANEERSFHPFLVDMIEEGIKEMSHAAEIVEEMPLAGKVVEEVPHATEGGQQKMDKGAEEAFEKHVEPSGHTATIQDTSRDISTQEVIQLSPHEWESDLSKLKPFVVLNKHRGRIEPVKDAFAAFCDEGLKPTTEETSIIWSMLGWNLARKPKGKHRQHLIAQARRGVLLDLRIVRMDESLWNKWMQLPKPLRMLKLNNLLNMHYQRWVHLFNIFQRRLSEIIGPPPKLKVAHGDTTDTSKALALHTHSNMQSSTPSEPLNAASTFKVERFVWGANRPKRTTDGNTGTISLPTKPTKTHRLKPLMPRLTESTTSSDLLVPTKRMRLSFGGTRSAFAPYKDPKEKLLAPSSTALTHKDIDLDLSLGGIYGKRTDKAL.

Positions 1–22 are cleaved as a signal peptide; that stretch reads MRGAYYIIIALCVVASSQVAAG. The RxLR-dEER signature appears at 48–65; sequence RFLRGSRVVHDDLANEER. The tract at residues 336 to 357 is disordered; sequence RPKRTTDGNTGTISLPTKPTKT. Over residues 342–354 the composition is skewed to polar residues; sequence DGNTGTISLPTKP.

It belongs to the RxLR effector family.

It localises to the secreted. Its subcellular location is the host nucleus. Its function is as follows. Secreted effector that acts as an elicitor that induces cell death in host plant cells. This is Secreted RxLR effector protein 35 from Plasmopara viticola (Downy mildew of grapevine).